The chain runs to 267 residues: Interleukin-1 beta (267 aa).

Positions 1-114 (MAIVPEPAKE…ETCNDDFVCD (114 aa)) are excised as a propeptide.

The protein belongs to the IL-1 family. As to quaternary structure, (Microbial infection) Interacts with African swine fever virus (ASFV) protein L83L. In terms of assembly, monomer. In its precursor form, weakly interacts with full-length MEFV; the mature cytokine does not interact at all. Interacts with integrins ITGAV:ITGBV and ITGA5:ITGB1; integrin-binding is required for IL1B signaling. Interacts with cargo receptor TMED10; the interaction is direct and is required for the secretion of IL1B mature form. Interacts with HSP90AB1; the interaction facilitates cargo translocation into the ERGIC. Interacts with HSP90B1; the interaction facilitates cargo translocation into the ERGIC.

It localises to the cytoplasm. It is found in the cytosol. The protein resides in the secreted. Its subcellular location is the lysosome. The protein localises to the extracellular exosome. In terms of biological role, potent pro-inflammatory cytokine. Initially discovered as the major endogenous pyrogen, induces prostaglandin synthesis, neutrophil influx and activation, T-cell activation and cytokine production, B-cell activation and antibody production, and fibroblast proliferation and collagen production. Promotes Th17 differentiation of T-cells. Synergizes with IL12/interleukin-12 to induce IFNG synthesis from T-helper 1 (Th1) cells. Plays a role in angiogenesis by inducing VEGF production synergistically with TNF and IL6. Involved in transduction of inflammation downstream of pyroptosis: its mature form is specifically released in the extracellular milieu by passing through the gasdermin-D (GSDMD) pore. The chain is Interleukin-1 beta (IL1B) from Sus scrofa (Pig).